Here is a 1966-residue protein sequence, read N- to C-terminus: Alpha-protein kinase 2 (1966 aa).

Disordered regions lie at residues 23–65 (NSSP…STGL), 211–231 (AMNS…DTDK), 1211–1259 (LKSN…AYSD), 1303–1365 (SLPN…EGAG), 1386–1423 (KTQG…VNGK), and 1437–1463 (NKPV…SVRP). Positions 211-227 (AMNSEQSPDQPFSIASN) are enriched in polar residues. A compositionally biased stretch (low complexity) spans 1211–1221 (LKSNKKSSSSD). Residues 1325–1342 (SDGKMRSKHKEKPDDKQQ) show a composition bias toward basic and acidic residues. Over residues 1388-1397 (QGKKKKKHVQ) the composition is skewed to basic residues. Positions 1401-1417 (PKPENDAPTDVRSESRQ) are enriched in basic and acidic residues. The Ig-like domain maps to 1577–1659 (PRVVSEIQAD…SLIVANISVS (83 aa)). C1599 and C1649 are disulfide-bonded. An Alpha-type protein kinase domain is found at 1702–1934 (KEDFLSDQYF…YCELLGLVSL (233 aa)). The tract at residues 1937–1966 (KPKRTVAPPKPKTQPVPKKKTFGPVLNAKS) is disordered.

The protein belongs to the protein kinase superfamily. Alpha-type protein kinase family. ALPK subfamily. In terms of tissue distribution, expressed in developing cardiac tissue.

Its subcellular location is the basolateral cell membrane. It carries out the reaction L-seryl-[protein] + ATP = O-phospho-L-seryl-[protein] + ADP + H(+). The enzyme catalyses L-threonyl-[protein] + ATP = O-phospho-L-threonyl-[protein] + ADP + H(+). Its function is as follows. Protein kinase that recognizes phosphorylation sites in which the surrounding peptides have an alpha-helical conformation. Regulates cardiac development and cardiomyocyte differentiation by negatively regulating Wnt/beta-catenin signaling. The polypeptide is Alpha-protein kinase 2 (alpk2) (Danio rerio (Zebrafish)).